The chain runs to 484 residues: MKLRDLAGVLPVEGTASADLEVTGISSDSRQVKPGVVFFALAGTKADGAAYAADAARRGALAVVAGKSNSVAGLPVPVLTVDDPRLALALSAARYFGKQPRTMVAVTGTSGKTSVAAFTRQIWEQAGYAAASIGTTGVVAPGRNEYGSLTTPDPVALHQLLRELADAGVTYASMEASSHGLDQRRLDGVKLAAGGFTNLGRDHMDYHPTVEDYHRAKLRLFDTLLPKGAPAVIFADDPWSAPTIQAAQAAGLNVLTVGRHGDFLTLKRVEHERHRQRAEVEAEGVLYEIDLPLAGDFQISNALVSAGLAISTGTPVAKALAALEKLKGAPGRLDLVGTTVSGAPVYVDYAHKPDALENVLASVRPFTTGRVMVVFGCGGDRDRGKRPIMGEIATRLADVVIVTDDNPRSEVPETIRAAILAAAPGAIEIGDRRKAIHEAVGMLHAGDTLIVAGKGHEEGQTIGSETLHFSDHEEVRAALRERAA.

Serine 29 lines the UDP-N-acetyl-alpha-D-muramoyl-L-alanyl-D-glutamate pocket. ATP is bound at residue 108 to 114; the sequence is GTSGKTS. UDP-N-acetyl-alpha-D-muramoyl-L-alanyl-D-glutamate contacts are provided by residues 150–151, serine 177, glutamine 183, and arginine 185; that span reads TT. At lysine 217 the chain carries N6-carboxylysine. Residues arginine 381, 405–408, glycine 453, and glutamate 457 contribute to the meso-2,6-diaminopimelate site; that span reads DNPR. The short motif at 405-408 is the Meso-diaminopimelate recognition motif element; the sequence is DNPR.

Belongs to the MurCDEF family. MurE subfamily. It depends on Mg(2+) as a cofactor. In terms of processing, carboxylation is probably crucial for Mg(2+) binding and, consequently, for the gamma-phosphate positioning of ATP.

It is found in the cytoplasm. The catalysed reaction is UDP-N-acetyl-alpha-D-muramoyl-L-alanyl-D-glutamate + meso-2,6-diaminopimelate + ATP = UDP-N-acetyl-alpha-D-muramoyl-L-alanyl-gamma-D-glutamyl-meso-2,6-diaminopimelate + ADP + phosphate + H(+). The protein operates within cell wall biogenesis; peptidoglycan biosynthesis. Functionally, catalyzes the addition of meso-diaminopimelic acid to the nucleotide precursor UDP-N-acetylmuramoyl-L-alanyl-D-glutamate (UMAG) in the biosynthesis of bacterial cell-wall peptidoglycan. In Mesorhizobium japonicum (strain LMG 29417 / CECT 9101 / MAFF 303099) (Mesorhizobium loti (strain MAFF 303099)), this protein is UDP-N-acetylmuramoyl-L-alanyl-D-glutamate--2,6-diaminopimelate ligase.